The sequence spans 868 residues: Leucine--tRNA ligase (868 aa).

Positions 42–52 match the 'HIGH' region motif; sequence PYPSGKLHMGH. A 'KMSKS' region motif is present at residues 627-631; it reads KMSKS. K630 is an ATP binding site.

It belongs to the class-I aminoacyl-tRNA synthetase family.

The protein localises to the cytoplasm. The enzyme catalyses tRNA(Leu) + L-leucine + ATP = L-leucyl-tRNA(Leu) + AMP + diphosphate. The protein is Leucine--tRNA ligase of Pseudomonas savastanoi pv. phaseolicola (strain 1448A / Race 6) (Pseudomonas syringae pv. phaseolicola (strain 1448A / Race 6)).